Reading from the N-terminus, the 340-residue chain is Protein HP_1247 (340 aa).

Seems to interact with H.pylori HolB.

Its function is as follows. Could be the functional equivalent of DNA polymerase III delta subunit (HolA). The polypeptide is Protein HP_1247 (Helicobacter pylori (strain ATCC 700392 / 26695) (Campylobacter pylori)).